The chain runs to 83 residues: Putative membrane protein insertion efficiency factor (83 aa).

It belongs to the UPF0161 family.

It is found in the cell inner membrane. Could be involved in insertion of integral membrane proteins into the membrane. The chain is Putative membrane protein insertion efficiency factor from Pelagibacter ubique (strain HTCC1062).